The primary structure comprises 511 residues: Aldehyde dehydrogenase X, mitochondrial (511 aa).

The transit peptide at 1–11 (PRLFALHHSAT) directs the protein to the mitochondrion. An N6-acetyllysine modification is found at Lys-45. Lys-46 is modified (N6-acetyllysine; alternate). Lys-46 carries the post-translational modification N6-succinyllysine; alternate. N6-succinyllysine is present on Lys-75. 256–261 (GSTKVG) lines the NAD(+) pocket. Glu-279 serves as the catalytic Proton acceptor. Cys-313 acts as the Nucleophile in catalysis. An N6-acetyllysine; alternate mark is found at Lys-377, Lys-393, and Lys-420. N6-succinyllysine; alternate occurs at positions 377, 393, and 420. Lys-423 is modified (N6-acetyllysine).

Belongs to the aldehyde dehydrogenase family. In terms of assembly, homotetramer.

It localises to the mitochondrion matrix. It catalyses the reaction an aldehyde + NAD(+) + H2O = a carboxylate + NADH + 2 H(+). It participates in alcohol metabolism; ethanol degradation; acetate from ethanol: step 2/2. Its function is as follows. ALDHs play a major role in the detoxification of alcohol-derived acetaldehyde. They are involved in the metabolism of corticosteroids, biogenic amines, neurotransmitters, and lipid peroxidation. In the cornea, this enzyme may help in the absorption of the damaging UV-B, as well as in the detoxification of the UV-induced peroxidic aldehydes. The polypeptide is Aldehyde dehydrogenase X, mitochondrial (ALDH1B1) (Bos taurus (Bovine)).